Here is a 395-residue protein sequence, read N- to C-terminus: Receptor-like cytoplasmic kinase 176 (395 aa).

A disordered region spans residues 1–45; the sequence is MGNCWGAKISSESPCRSASSPSGGTSKYASNSSVSAASVPPTPRS. Composition is skewed to low complexity over residues 10–22 and 29–39; these read SSESPCRSASSPS and ASNSSVSAASV. The 286-residue stretch at 70-355 folds into the Protein kinase domain; sequence FRPDSVLGEG…EQVVAVLEQL (286 aa). Residues 76–84 and Lys-108 contribute to the ATP site; that span reads LGEGGFGSV. Residue Asp-205 is the Proton acceptor of the active site. The disordered stretch occupies residues 359-395; sequence KETGANPQLQKKSSSKNAGSNGSKPSSKGKPANARLV. The span at 369–395 shows a compositional bias: low complexity; that stretch reads KKSSSKNAGSNGSKPSSKGKPANARLV.

This sequence belongs to the protein kinase superfamily. Ser/Thr protein kinase family. In terms of assembly, interacts with CERK1.

The enzyme catalyses L-seryl-[protein] + ATP = O-phospho-L-seryl-[protein] + ADP + H(+). It carries out the reaction L-threonyl-[protein] + ATP = O-phospho-L-threonyl-[protein] + ADP + H(+). Its function is as follows. Functions downstream of CERK1 in the microbial peptidoglycans (PGNs) and fungal chitin signaling pathways that mediate innate immunity. Participates in the activation of defense genes during response to PGN and chitin. The polypeptide is Receptor-like cytoplasmic kinase 176 (Oryza sativa subsp. japonica (Rice)).